A 477-amino-acid polypeptide reads, in one-letter code: GH30 family xylanase (477 aa).

An N-terminal signal peptide occupies residues 1-19; that stretch reads MYSLLIALLCAGTAVDAQA. Asn194, Asn237, and Asn331 each carry an N-linked (GlcNAc...) asparagine glycan.

The protein belongs to the glycosyl hydrolase 30 family.

It localises to the secreted. With respect to regulation, activity is enhanced by 10 mM Co(2+), Cu 2(2+) and Mn(2+) to levels as high as 44%. Partial inhibition of activity from 5 to 15% is observed in the presence of the following compouinds at a centration of 10 mM (from higher inhibition to lower): EDTA &gt; Mg(2+) &gt; urea, Zn(2+) &gt; Fe(3+). In terms of biological role, xylanase exhibiting endo- and exo-xylanase activity. Shows the highest activity toward beechwood glucuronoxylan, which consists of a beta-1,4-linked xylose backbone decorated with the methylated form of D-glucuronic acid (MeGlcA) attached directly to the main chain at xylose C2. Also acts against wheat arabinoxylan, a xylan without MeGlcA substituents along the main chain, but the xylanase activity is about two orders of magnitude lower than that achieved in the case of beechwood xylan. Shows no activity against carob galactomannan, konjac glucomannan, or barley beta-glucan. The recombinant xylanase also exhibits an exo-activity by releasing processively disaccharide units from the non-reducing end of linear and decorated xylooligosaccharides (XOS). The sequence is that of GH30 family xylanase from Thermothelomyces thermophilus (strain ATCC 42464 / BCRC 31852 / DSM 1799) (Sporotrichum thermophile).